The primary structure comprises 573 residues: Probable D-xylulose kinase A (573 aa).

Positions 100, 171, 287, and 288 each coordinate substrate. Residues Trp368, 473–474 (GG), and Asn477 each bind ATP.

It belongs to the FGGY kinase family.

The protein localises to the cytoplasm. The enzyme catalyses D-xylulose + ATP = D-xylulose 5-phosphate + ADP + H(+). Its function is as follows. Highly specific D-xylulose kinase which participates in the catabolism of xylose. Xylose is a major component of hemicelluloses such as xylan. Most fungi utilize D-xylose via three enzymatic reactions, xylose reductase (XR), xylitol dehydrogenase (XDH), and xylulokinase, to form xylulose 5-phosphate, which enters pentose phosphate pathway. In Aspergillus terreus (strain NIH 2624 / FGSC A1156), this protein is Probable D-xylulose kinase A (xkiA).